The chain runs to 383 residues: Dual-specificity RNA methyltransferase RlmN (383 aa).

The active-site Proton acceptor is glutamate 93. One can recognise a Radical SAM core domain in the interval 99-339 (EETRGTLCVS…TTIRKTRGDD (241 aa)). Cysteine 106 and cysteine 344 are disulfide-bonded. [4Fe-4S] cluster contacts are provided by cysteine 113, cysteine 117, and cysteine 120. Residues 170 to 171 (GE), serine 202, 224 to 226 (SLH), and asparagine 301 contribute to the S-adenosyl-L-methionine site. The active-site S-methylcysteine intermediate is cysteine 344.

It belongs to the radical SAM superfamily. RlmN family. [4Fe-4S] cluster serves as cofactor.

It is found in the cytoplasm. The catalysed reaction is adenosine(2503) in 23S rRNA + 2 reduced [2Fe-2S]-[ferredoxin] + 2 S-adenosyl-L-methionine = 2-methyladenosine(2503) in 23S rRNA + 5'-deoxyadenosine + L-methionine + 2 oxidized [2Fe-2S]-[ferredoxin] + S-adenosyl-L-homocysteine. The enzyme catalyses adenosine(37) in tRNA + 2 reduced [2Fe-2S]-[ferredoxin] + 2 S-adenosyl-L-methionine = 2-methyladenosine(37) in tRNA + 5'-deoxyadenosine + L-methionine + 2 oxidized [2Fe-2S]-[ferredoxin] + S-adenosyl-L-homocysteine. Functionally, specifically methylates position 2 of adenine 2503 in 23S rRNA and position 2 of adenine 37 in tRNAs. m2A2503 modification seems to play a crucial role in the proofreading step occurring at the peptidyl transferase center and thus would serve to optimize ribosomal fidelity. In Ralstonia nicotianae (strain ATCC BAA-1114 / GMI1000) (Ralstonia solanacearum), this protein is Dual-specificity RNA methyltransferase RlmN.